Consider the following 487-residue polypeptide: L-tartrate/succinate antiporter (487 aa).

14 helical membrane-spanning segments follow: residues 10 to 30 (YLAPLAVIAIIALIPVPAGLE), 33 to 53 (TWLYFAVFTGVIVGLILEPVP), 54 to 74 (GAVVAMVGISIIAILSPWLLF), 93 to 113 (WAVSGFSNSVIWLIFAAFMFG), 137 to 157 (TLFLGYAVMFSELILAPVTPS), 189 to 209 (IGSYIMWMGIVADCVTSAIFL), 236 to 256 (FLGMLPLSILLVLLVPWLAYV), 292 to 312 (LMVGALVLWIFGGDYIDAAMV), 313 to 333 (GYSVVALMLLLRIISWDDIVS), 340 to 360 (VFFWLASLITLATGLNNTGFI), 370 to 390 (SLSGYSPTMVMVALIVVFYLL), 393 to 413 (FFASATAYTSALAPMMIAAAL), 418 to 438 (IPLPVFCLMVGAAIGLGSILT), and 465 to 485 (IFGLIFLVLLVITGLLWMPVV).

Belongs to the SLC13A/DASS transporter (TC 2.A.47) family. DIT1 subfamily.

The protein resides in the cell inner membrane. It catalyses the reaction (2R,3R)-tartrate(out) + succinate(in) = (2R,3R)-tartrate(in) + succinate(out). In terms of biological role, catalyzes the uptake of tartrate in exchange for intracellular succinate. Essential for anaerobic L-tartrate fermentation. This Escherichia coli O157:H7 protein is L-tartrate/succinate antiporter (ttdT).